Reading from the N-terminus, the 298-residue chain is MQTQRLRIAIQKKGRLSEECQGLLKKCGVKFNIMGERLVVHSENMPIDLLLVRDDDIPGLIMDGVVDLGFIGENVLEEVRLERKATGDACQFETLSRLDFGGCRLSIAIDKDEKYNGPQDLAGKRIATTYPQLLKAYMDRQGVPFSTCMLTGSVEVAPRAGLADAIADLVSTGATLEANGLKEAEVIFQSKATLIQRSGEFAQDKQALIEKLLTRMQGVQQAKESKYIMLHAPVDKLEQIKALLPGAEDPTVLPLSAEKQRVAVHLVSTENLFWETMEQLKELGASSILVLPIEKMME.

Belongs to the ATP phosphoribosyltransferase family. Long subfamily. It depends on Mg(2+) as a cofactor.

It is found in the cytoplasm. The enzyme catalyses 1-(5-phospho-beta-D-ribosyl)-ATP + diphosphate = 5-phospho-alpha-D-ribose 1-diphosphate + ATP. It functions in the pathway amino-acid biosynthesis; L-histidine biosynthesis; L-histidine from 5-phospho-alpha-D-ribose 1-diphosphate: step 1/9. Feedback inhibited by histidine. Functionally, catalyzes the condensation of ATP and 5-phosphoribose 1-diphosphate to form N'-(5'-phosphoribosyl)-ATP (PR-ATP). Has a crucial role in the pathway because the rate of histidine biosynthesis seems to be controlled primarily by regulation of HisG enzymatic activity. The protein is ATP phosphoribosyltransferase of Vibrio vulnificus (strain CMCP6).